A 178-amino-acid chain; its full sequence is Stage V sporulation protein T (178 aa).

Residues 5 to 51 enclose the SpoVT-AbrB domain; that stretch reads GIVRRIDDLGRVVIPKEIRRTLRIREGDPLEIFVDRDGEVILKKYSP. Positions 56–178 are GAF-like; sequence GDFAKEYADA…AGFLARQMEQ (123 aa).

This sequence to B.subtilis AbrB and Abh. In terms of assembly, homotetramer. Two monomers dimerize via their N-terminal swapped-hairpin domains. These dimers further associate into tetramers through helical interactions between their C-terminal GAF-like domains.

Transcriptional factor that positively regulates or negatively the expression of a large number of forespore-specific sigma G-dependent genes. May provide a mechanism of feedback control that is important for forespore development. SpoVT levels during spore formation have a major impact on the germination and the resistance of the resultant spores. The sequence is that of Stage V sporulation protein T from Bacillus subtilis (strain 168).